The following is a 141-amino-acid chain: Nucleoside diphosphate kinase (141 aa).

ATP-binding residues include Lys11, Phe59, Arg87, Thr93, Arg104, and Asn114. His117 serves as the catalytic Pros-phosphohistidine intermediate.

Belongs to the NDK family. Homotetramer. The cofactor is Mg(2+).

Its subcellular location is the cytoplasm. The catalysed reaction is a 2'-deoxyribonucleoside 5'-diphosphate + ATP = a 2'-deoxyribonucleoside 5'-triphosphate + ADP. The enzyme catalyses a ribonucleoside 5'-diphosphate + ATP = a ribonucleoside 5'-triphosphate + ADP. In terms of biological role, major role in the synthesis of nucleoside triphosphates other than ATP. The ATP gamma phosphate is transferred to the NDP beta phosphate via a ping-pong mechanism, using a phosphorylated active-site intermediate. This chain is Nucleoside diphosphate kinase, found in Bdellovibrio bacteriovorus (strain ATCC 15356 / DSM 50701 / NCIMB 9529 / HD100).